Consider the following 216-residue polypeptide: Adenylate kinase (216 aa).

Residue 10 to 15 (GAGKGT) coordinates ATP. The segment at 30–59 (STGDIFRKNIKEGTELGKKAKEYMDQGLLV) is NMP. AMP-binding positions include threonine 31, arginine 36, 57-59 (LLV), 85-88 (GFPR), and glutamine 92. Residues 126 to 163 (GRRICKSCGATYHVEFNPPKVEGVCDVCQGELYQRADD) are LID. Arginine 127 contributes to the ATP binding site. Residues cysteine 130 and cysteine 133 each contribute to the Zn(2+) site. 136-137 (TY) lines the ATP pocket. Residues cysteine 150 and cysteine 153 each coordinate Zn(2+). Residues arginine 160 and arginine 171 each coordinate AMP. Glutamine 199 serves as a coordination point for ATP.

It belongs to the adenylate kinase family. In terms of assembly, monomer.

The protein localises to the cytoplasm. It carries out the reaction AMP + ATP = 2 ADP. It participates in purine metabolism; AMP biosynthesis via salvage pathway; AMP from ADP: step 1/1. In terms of biological role, catalyzes the reversible transfer of the terminal phosphate group between ATP and AMP. Plays an important role in cellular energy homeostasis and in adenine nucleotide metabolism. The chain is Adenylate kinase from Clostridioides difficile (strain 630) (Peptoclostridium difficile).